The primary structure comprises 212 residues: Phosphoenolpyruvate guanylyltransferase (212 aa).

Phosphoenolpyruvate contacts are provided by threonine 139, glycine 155, and serine 158.

Belongs to the CofC family.

The catalysed reaction is phosphoenolpyruvate + GTP + H(+) = enolpyruvoyl-2-diphospho-5'-guanosine + diphosphate. Its pathway is cofactor biosynthesis; coenzyme F420 biosynthesis. Functionally, guanylyltransferase that catalyzes the activation of phosphoenolpyruvate (PEP) as enolpyruvoyl-2-diphospho-5'-guanosine, via the condensation of PEP with GTP. It is involved in the biosynthesis of coenzyme F420, a hydride carrier cofactor. The sequence is that of Phosphoenolpyruvate guanylyltransferase from Streptomyces coelicolor (strain ATCC BAA-471 / A3(2) / M145).